The following is a 435-amino-acid chain: MKTQIEIAREGTISSQMMAVAAEEHVSPDYVRQMVAEGKIVIPGNHSRKPRAVGIGKGLRTKVNASIGTSSDIIDYGAEVRKALAAQEAGADTLMELSVGGDLDRVRREVIAAVDLPVGNVPLYQAFCEAARKYGDPNKLDPEMLFDLIEKQCEDGMAFMAVHCGINLYTIERLKRQGYRYGGLVSKGGVSMVAWMMANRRENPLYEQFDRVTSILRKYDTVLSLGNGLRAGAIHDSSDRAQIQELLINCELAELGREMGCQMLVEGPGHVPLDEVEGNIQLQKRMSGGAPYYMLGPISTDVAPGFDHITAAIGAAQSSRYGADLICYITPAEHLALPNEEDVRQGVKAAKIAAYIGDMNKYPERGRERDKEMSKARRDLDWKKQFELALFPEDAKAIRASRTPEDEATCTMCGDFCASRGAGKLFAADLRGDKI.

Residues methionine 95, tyrosine 124, histidine 163, 186–188, 227–230, and glutamate 266 contribute to the substrate site; these read SKG and NGLR. Residue histidine 270 coordinates Zn(2+). Substrate is bound at residue tyrosine 293. Zn(2+) is bound at residue histidine 334. The [4Fe-4S] cluster site is built by cysteine 410, cysteine 413, and cysteine 417.

It belongs to the ThiC family. 5-hydroxybenzimidazole synthase subfamily. Homodimer. It depends on [4Fe-4S] cluster as a cofactor.

The enzyme catalyses 5-amino-1-(5-phospho-beta-D-ribosyl)imidazole + AH2 + S-adenosyl-L-methionine = 5-hydroxybenzimidazole + 5'-deoxyadenosine + formate + L-methionine + A + NH4(+) + phosphate + 2 H(+). In terms of biological role, catalyzes the conversion of aminoimidazole ribotide (AIR) to 5-hydroxybenzimidazole (5-HBI) in a radical S-adenosyl-L-methionine (SAM)-dependent reaction. Is thus involved in the anaerobic biosynthesis of the benzimidazole lower axial ligand of the cobamide produced by G.metallireducens. The protein is 5-hydroxybenzimidazole synthase of Geobacter metallireducens (strain ATCC 53774 / DSM 7210 / GS-15).